Consider the following 129-residue polypeptide: Large ribosomal subunit protein bL12c (129 aa).

Belongs to the bacterial ribosomal protein bL12 family. In terms of assembly, homodimer. Part of the ribosomal stalk of the 50S ribosomal subunit. Forms a multimeric L10(L12)X complex, where L10 forms an elongated spine to which 2 to 4 L12 dimers bind in a sequential fashion. Binds GTP-bound translation factors.

The protein localises to the plastid. Its subcellular location is the chloroplast. Forms part of the ribosomal stalk which helps the ribosome interact with GTP-bound translation factors. Is thus essential for accurate translation. This chain is Large ribosomal subunit protein bL12c, found in Oltmannsiellopsis viridis (Marine flagellate).